Reading from the N-terminus, the 290-residue chain is Hydroxyacylglutathione hydrolase-like protein (290 aa).

7 residues coordinate Zn(2+): histidine 54, histidine 56, aspartate 58, histidine 59, histidine 110, aspartate 134, and histidine 172.

The protein belongs to the metallo-beta-lactamase superfamily. Glyoxalase II family. Requires Zn(2+) as cofactor.

Hydrolase acting on ester bonds. The polypeptide is Hydroxyacylglutathione hydrolase-like protein (HAGHL) (Homo sapiens (Human)).